We begin with the raw amino-acid sequence, 149 residues long: D-aminoacyl-tRNA deacylase (149 aa).

A Gly-cisPro motif, important for rejection of L-amino acids motif is present at residues 137 to 138; that stretch reads GP.

It belongs to the DTD family. Homodimer.

It localises to the cytoplasm. The enzyme catalyses glycyl-tRNA(Ala) + H2O = tRNA(Ala) + glycine + H(+). The catalysed reaction is a D-aminoacyl-tRNA + H2O = a tRNA + a D-alpha-amino acid + H(+). Functionally, an aminoacyl-tRNA editing enzyme that deacylates mischarged D-aminoacyl-tRNAs. Also deacylates mischarged glycyl-tRNA(Ala), protecting cells against glycine mischarging by AlaRS. Acts via tRNA-based rather than protein-based catalysis; rejects L-amino acids rather than detecting D-amino acids in the active site. By recycling D-aminoacyl-tRNA to D-amino acids and free tRNA molecules, this enzyme counteracts the toxicity associated with the formation of D-aminoacyl-tRNA entities in vivo and helps enforce protein L-homochirality. This Thermotoga petrophila (strain ATCC BAA-488 / DSM 13995 / JCM 10881 / RKU-1) protein is D-aminoacyl-tRNA deacylase.